Reading from the N-terminus, the 217-residue chain is Chorionic somatomammotropin hormone 2 (217 aa).

A signal peptide spans 1-26 (MAAGSRTSLLLAFALLCLPWLQEAGA). His-44 serves as a coordination point for Zn(2+). Residues Cys-79 and Cys-191 are joined by a disulfide bond. Glu-200 serves as a coordination point for Zn(2+). Cys-208 and Cys-215 are oxidised to a cystine.

This sequence belongs to the somatotropin/prolactin family. Can be found in a monomeric as well as dimeric form.

It is found in the secreted. In terms of biological role, produced only during pregnancy and is involved in stimulating lactation, fetal growth and metabolism. Does not interact with GHR but only activates PRLR through zinc-induced dimerization. This is Chorionic somatomammotropin hormone 2 (CSH2) from Homo sapiens (Human).